Reading from the N-terminus, the 125-residue chain is Large ribosomal subunit protein bL17 (125 aa).

Belongs to the bacterial ribosomal protein bL17 family. Part of the 50S ribosomal subunit. Contacts protein L32.

The polypeptide is Large ribosomal subunit protein bL17 (Blochmanniella pennsylvanica (strain BPEN)).